Reading from the N-terminus, the 126-residue chain is Holo-[acyl-carrier-protein] synthase (126 aa).

Residues aspartate 9 and glutamate 58 each coordinate Mg(2+).

The protein belongs to the P-Pant transferase superfamily. AcpS family. It depends on Mg(2+) as a cofactor.

The protein resides in the cytoplasm. It carries out the reaction apo-[ACP] + CoA = holo-[ACP] + adenosine 3',5'-bisphosphate + H(+). Its function is as follows. Transfers the 4'-phosphopantetheine moiety from coenzyme A to a Ser of acyl-carrier-protein. The protein is Holo-[acyl-carrier-protein] synthase of Shewanella denitrificans (strain OS217 / ATCC BAA-1090 / DSM 15013).